We begin with the raw amino-acid sequence, 156 residues long: ATP synthase subunit b (156 aa).

The helical transmembrane segment at 11–31 threads the bilayer; it reads AIAFVLFVLFCMKYIWPPIMA.

This sequence belongs to the ATPase B chain family. F-type ATPases have 2 components, F(1) - the catalytic core - and F(0) - the membrane proton channel. F(1) has five subunits: alpha(3), beta(3), gamma(1), delta(1), epsilon(1). F(0) has three main subunits: a(1), b(2) and c(10-14). The alpha and beta chains form an alternating ring which encloses part of the gamma chain. F(1) is attached to F(0) by a central stalk formed by the gamma and epsilon chains, while a peripheral stalk is formed by the delta and b chains.

Its subcellular location is the cell inner membrane. In terms of biological role, f(1)F(0) ATP synthase produces ATP from ADP in the presence of a proton or sodium gradient. F-type ATPases consist of two structural domains, F(1) containing the extramembraneous catalytic core and F(0) containing the membrane proton channel, linked together by a central stalk and a peripheral stalk. During catalysis, ATP synthesis in the catalytic domain of F(1) is coupled via a rotary mechanism of the central stalk subunits to proton translocation. Functionally, component of the F(0) channel, it forms part of the peripheral stalk, linking F(1) to F(0). The chain is ATP synthase subunit b from Yersinia enterocolitica serotype O:8 / biotype 1B (strain NCTC 13174 / 8081).